We begin with the raw amino-acid sequence, 1116 residues long: Disease resistance protein RGA5 (1116 aa).

The interval 1-177 (MDAPASFSLG…HHGVSANLVG (177 aa)) is structured coiled coil (CC) domain. In terms of domain architecture, NB-ARC spans 182 to 466 (KTKLNRWLSD…WSAEGFVSAN (285 aa)). LRR repeat units lie at residues 608–631 (LFQLRYLKTSGDVVVQLPAQISGL), 633–653 (YLETLEIDARVSAVPFDLVHL), 654–675 (PNLLHLQLQDETKLPDGIGCMR), 677–701 (LRTLQYFDLGNNSVDNLRGLGELTN), 732–755 (LSNLKSLILSPGAISMVIFFDISS), 786–808 (LHKLCILKVSVRELLTTDIDNLT), 810–830 (LPSLTVLSLYAQTAPEGRFIF), 835–857 (LPVLKYFKFGCGELCLAFMAGAM), and 858–882 (PNLQRLKLVFNIRKSEKYRHTLFGI). The disordered stretch occupies residues 935 to 971 (EEESHPLEKQHHKREKGSSAGHGVLEKESVEDSEKNT). Positions 958 to 971 (VLEKESVEDSEKNT) are enriched in basic and acidic residues. The region spanning 997-1066 (RTKIVVKVHM…KCGLAELLMV (70 aa)) is the HMA domain. An HMA-like domain region spans residues 1000 to 1070 (IVVKVHMPCG…AELLMVELVE (71 aa)).

Belongs to the disease resistance NB-LRR family. Forms homodimer or heterodimer with RGA4 through its coiled coil (CC) domain. Interacts with AVR1-Pia and AVR-CO39 through its C-terminal part containing the HMA-like domain. Expressed in leaves.

Its subcellular location is the cytoplasm. Disease resistance (R) protein that recognizes the AVR-Pia and AVR1-CO39 effector avirulence proteins from M.oryzae. Resistance proteins guard the plant against pathogens that contain an appropriate avirulence protein via an indirect interaction with this avirulence protein. That triggers a defense system including the hypersensitive response, which restricts the pathogen growth. Contribution of RGA4 is required to recognize the effector avirulence proteins AVR-Pia and AVR1-CO39 from M.oryzae. Acts as a repressor of the RGA4-mediated cell death activation. Upon infection, recognition and binding of the AVR effectors relieve the RGA5-mediated repression and triggers the hypersensitive response. Immune response triggered by the RGA4-RGA5 -mediated recognition of AVR1-CO39 confers resistance to X.oryzae pathovars. The chain is Disease resistance protein RGA5 from Oryza sativa subsp. japonica (Rice).